The following is a 373-amino-acid chain: tRNA (guanine(26)-N(2))-dimethyltransferase (373 aa).

Positions 2 to 365 (KIISEGETKL…AELSDLVVLI (364 aa)) constitute a Trm1 methyltransferase domain. R35, R66, D86, D113, and A114 together coordinate S-adenosyl-L-methionine.

Belongs to the class I-like SAM-binding methyltransferase superfamily. Trm1 family.

The enzyme catalyses guanosine(26) in tRNA + 2 S-adenosyl-L-methionine = N(2)-dimethylguanosine(26) in tRNA + 2 S-adenosyl-L-homocysteine + 2 H(+). Its function is as follows. Dimethylates a single guanine residue at position 26 of a number of tRNAs using S-adenosyl-L-methionine as donor of the methyl groups. This is tRNA (guanine(26)-N(2))-dimethyltransferase from Methanococcus maripaludis (strain C5 / ATCC BAA-1333).